A 135-amino-acid chain; its full sequence is UPF0299 membrane protein Spro_1570 (135 aa).

4 consecutive transmembrane segments (helical) span residues 4 to 24, 30 to 50, 63 to 83, and 93 to 113; these read LFTL…CLFA, ALLP…FALL, GCHL…VGVM, and LGPL…VVGY.

This sequence belongs to the UPF0299 family.

Its subcellular location is the cell inner membrane. This is UPF0299 membrane protein Spro_1570 from Serratia proteamaculans (strain 568).